Reading from the N-terminus, the 192-residue chain is MYQDLIRGELTEAADTLSRFLQDDANIEAIQKAAVLLADSFKAGGKVLSCGNGGSHCDAMHFAEELTGRYRENRPGYPAIAISDVSHISCVSNDFGYEYVFSRYVEAVGKEGDVLLGISTSGNSGNIIKAISAAREKGMKVITLTGKDGGKMAGSADIEIRVPHFGYADRIQEIHIKVIHILIQLIEKEMEK.

The SIS domain maps to 37–192 (LADSFKAGGK…IQLIEKEMEK (156 aa)). 52–54 (NGG) contributes to the substrate binding site. Zn(2+)-binding residues include H61 and E65. Residues E65, 93–94 (ND), 119–121 (STS), S124, and Q172 contribute to the substrate site. Residues Q172 and H180 each contribute to the Zn(2+) site.

This sequence belongs to the SIS family. GmhA subfamily. In terms of assembly, homotetramer. Requires Zn(2+) as cofactor.

The protein localises to the cytoplasm. The catalysed reaction is 2 D-sedoheptulose 7-phosphate = D-glycero-alpha-D-manno-heptose 7-phosphate + D-glycero-beta-D-manno-heptose 7-phosphate. Its pathway is carbohydrate biosynthesis; D-glycero-D-manno-heptose 7-phosphate biosynthesis; D-glycero-alpha-D-manno-heptose 7-phosphate and D-glycero-beta-D-manno-heptose 7-phosphate from sedoheptulose 7-phosphate: step 1/1. Functionally, catalyzes the isomerization of sedoheptulose 7-phosphate in D-glycero-D-manno-heptose 7-phosphate. This is Phosphoheptose isomerase from Proteus mirabilis (strain HI4320).